The sequence spans 941 residues: MSMSFSGGTHNDRWGSDLASAGEFTQSFPSLPATYSPSPSSSSSSGEELLEVTIEFPSGVIINIDSVTGTGTDISGTDLEITSCSDSGSGSRSLSLGWSASSERLTAGTNSKQQIQKISRRGYGYSSRSAPEPVVPHRGEITDSVNLPRALSQRPTRPNRDGSGTERAIHGLKFISSKENGIVDWNDVQNNFAHLSKDGYLFKSDFAHCIGLENENSKEFADELFDALCRRRRIMVDKINLQELYEFWYQITDESFDSRLQIFFNMVKNGDGRITENEVKEIIILSASANNLSRLRERAEEYAALIMEELAPDGLYSQYIELKDLEILLLEKDISHSYSLPFSQTSRALSQNLKDRRWRMSRNLLYSLQDNWKRIWVLTLWFVIMAWLFMWKCYQYKHKDAFHVMGYCLVMAKGAAETLKFNMALILLPVCRNTITYLRSTALSHSVPFDDCINFHKTISVAIISAMLLHATSHLACDFPRILASTDTDYKRYLVKYFGVTRPTYFGLVNTPVGITGIIMVAFMLIAFTLASRRCRRNLTKLPKPFDKLTGYNAFWYSHHLLLTVYVLLVIHGVSLYLEHKWYRKTVWMYLAVPVLLYVGERIFRFFRSRLYTVEICKVVIYPGNVVVLRMSKPTSFDYKSGQYVFVQCPSVSKFEWHPFSITSSPGDDYLSIHIRQRGDWTEGIKKAFSVVCHAPEAGKSGLLRADVPNQRSFPELLIDGPYGAPAQDHWKYDVVLLVGLGIGATPFVSILRDLLNNIIKQQEQAECISGSCSNSNISSDHSFSCLNSEAASRIPQTQRKTLNTKNAYFYWVTREQGSFDWFKEIMNEIADSDRKGVIEMHNYLTSVYEEGDTRSNLLTMIQTLNHAKNGVDIFSGTKVRTHFGRPKWKKVLSKISTKHRNARIGVFYCGVPSLGKELSTLCHEFNQTGITRFDFHKEQF.

At 1–374 the chain is on the cytoplasmic side; the sequence is MSMSFSGGTH…LYSLQDNWKR (374 aa). Disordered regions lie at residues 29–48 and 103–166; these read PSLPATYSPSPSSSSSSGEE and ERLT…SGTE. Positions 36-45 are enriched in low complexity; that stretch reads SPSPSSSSSS. The span at 103-117 shows a compositional bias: polar residues; it reads ERLTAGTNSKQQIQK. EF-hand-like stretches follow at residues 196–204 and 232–243; these read SKDGYLFKS and RRIMVDKINLQE. One can recognise an EF-hand domain in the interval 254 to 289; that stretch reads ESFDSRLQIFFNMVKNGDGRITENEVKEIIILSASA. Ca(2+)-binding residues include asparagine 269, aspartate 271, arginine 273, and glutamate 278. Serine 346 and serine 350 each carry phosphoserine. The helical transmembrane segment at 375–395 threads the bilayer; that stretch reads IWVLTLWFVIMAWLFMWKCYQ. The Extracellular segment spans residues 396–407; the sequence is YKHKDAFHVMGY. The helical transmembrane segment at 408–428 threads the bilayer; the sequence is CLVMAKGAAETLKFNMALILL. The Ferric oxidoreductase domain occupies 413–570; the sequence is KGAAETLKFN…LLLTVYVLLV (158 aa). Residues 429–514 are Cytoplasmic-facing; the sequence is PVCRNTITYL…YFGLVNTPVG (86 aa). Residues 515-535 traverse the membrane as a helical segment; it reads ITGIIMVAFMLIAFTLASRRC. Over 536-557 the chain is Extracellular; it reads RRNLTKLPKPFDKLTGYNAFWY. A helical transmembrane segment spans residues 558–578; it reads SHHLLLTVYVLLVIHGVSLYL. Residues 579-586 are Cytoplasmic-facing; sequence EHKWYRKT. A helical membrane pass occupies residues 587–604; sequence VWMYLAVPVLLYVGERIF. Residues 605–731 lie on the Extracellular side of the membrane; that stretch reads RFFRSRLYTV…PYGAPAQDHW (127 aa). One can recognise an FAD-binding FR-type domain in the interval 609–729; the sequence is SRLYTVEICK…DGPYGAPAQD (121 aa). Residues 732–752 form a helical membrane-spanning segment; it reads KYDVVLLVGLGIGATPFVSIL. Topologically, residues 753 to 941 are cytoplasmic; sequence RDLLNNIIKQ…TRFDFHKEQF (189 aa).

This sequence belongs to the RBOH (TC 5.B.1.3) family. Monomer and homodimer.

Its subcellular location is the membrane. Calcium-dependent NADPH oxidase that generates superoxide. This Arabidopsis thaliana (Mouse-ear cress) protein is Probable respiratory burst oxidase homolog protein I (RBOHI).